Reading from the N-terminus, the 231-residue chain is Putative carboxymethylenebutenolidase (231 aa).

Active-site residues include Cys118, Asp167, and His199.

Belongs to the dienelactone hydrolase family.

It carries out the reaction 2-(5-oxo-2,5-dihydrofuran-2-ylidene)acetate + H2O = 4-oxohex-2-enedioate + H(+). The chain is Putative carboxymethylenebutenolidase from Aquifex aeolicus (strain VF5).